The following is a 470-amino-acid chain: Argininosuccinate lyase (470 aa).

It belongs to the lyase 1 family. Argininosuccinate lyase subfamily.

The protein localises to the cytoplasm. It carries out the reaction 2-(N(omega)-L-arginino)succinate = fumarate + L-arginine. It participates in amino-acid biosynthesis; L-arginine biosynthesis; L-arginine from L-ornithine and carbamoyl phosphate: step 3/3. The sequence is that of Argininosuccinate lyase from Mycobacterium tuberculosis (strain CDC 1551 / Oshkosh).